A 180-amino-acid chain; its full sequence is Cytokinin-beta-glucosidase 1 (180 aa).

Its function is as follows. Hydrolyzes cytokinin glucosides thus liberating free cytokinins. The chain is Cytokinin-beta-glucosidase 1 (ROLC1) from Linaria vulgaris (Toadflax).